A 457-amino-acid polypeptide reads, in one-letter code: Phosphoglucosamine mutase (457 aa).

The active-site Phosphoserine intermediate is S106. Residues S106, D245, D247, and D249 each contribute to the Mg(2+) site. S106 is subject to Phosphoserine.

It belongs to the phosphohexose mutase family. Requires Mg(2+) as cofactor. Post-translationally, activated by phosphorylation.

The catalysed reaction is alpha-D-glucosamine 1-phosphate = D-glucosamine 6-phosphate. Its function is as follows. Catalyzes the conversion of glucosamine-6-phosphate to glucosamine-1-phosphate. This Methylibium petroleiphilum (strain ATCC BAA-1232 / LMG 22953 / PM1) protein is Phosphoglucosamine mutase.